The chain runs to 233 residues: Large ribosomal subunit protein eL6z (233 aa).

Positions 175–195 (EFFEAEKEEKKEIPQEKKEDQ) are disordered.

It belongs to the eukaryotic ribosomal protein eL6 family.

This chain is Large ribosomal subunit protein eL6z (RPL6A), found in Arabidopsis thaliana (Mouse-ear cress).